The following is a 146-amino-acid chain: Hemoglobin subunit beta (146 aa).

V1 is modified (N-acetylvaline). The region spanning 2–146 is the Globin domain; sequence HLTAEEKSAV…VANALAHKYH (145 aa). Residue S44 is modified to Phosphoserine. K59 carries the post-translational modification N6-acetyllysine. H63 is a heme b binding site. At K82 the chain carries N6-acetyllysine. H92 contacts heme b. C93 carries the post-translational modification S-nitrosocysteine. An N6-acetyllysine modification is found at K144.

The protein belongs to the globin family. Heterotetramer of two alpha chains and two beta chains. Red blood cells.

Its function is as follows. Involved in oxygen transport from the lung to the various peripheral tissues. This chain is Hemoglobin subunit beta, found in Tamias merriami (Merriam's chipmunk).